Reading from the N-terminus, the 263-residue chain is Small ribosomal subunit protein eS4 (263 aa).

The 63-residue stretch at 42-104 folds into the S4 RNA-binding domain; the sequence is LPLIIFLRNR…TGENFRLIYD (63 aa).

Belongs to the eukaryotic ribosomal protein eS4 family.

The polypeptide is Small ribosomal subunit protein eS4 (rps4) (Ictalurus punctatus (Channel catfish)).